The sequence spans 523 residues: Synaptotagmin-10 (523 aa).

Residues 1 to 55 are Vesicular-facing; sequence MSFHKEDGVNSLCQKALHIVTELCFAGQVEWEKCSGIFPRDRGSQGGSSTDISVS. The tract at residues 13 to 35 is cysteine motif; that stretch reads CQKALHIVTELCFAGQVEWEKCS. The helical transmembrane segment at 56–76 threads the bilayer; that stretch reads LLAVVVSFCGLALLVVSLFVF. Topologically, residues 77–523 are cytoplasmic; that stretch reads WKLCWPCWKS…CPSPKPPSTP (447 aa). Phosphothreonine is present on Thr136. 2 C2 domains span residues 231–352 and 363–496; these read ICGK…TVWK and DLGE…THWH. Asp262, Asp268, Asp320, Phe321, Asp322, Ser325, Asp328, Asp394, Asp400, Asp454, and Asp456 together coordinate Ca(2+).

The protein belongs to the synaptotagmin family. In terms of assembly, homodimer; disulfide-linked via the cysteine motif. Can also form heterodimers with SYT3, SYT6, SYT7 and SYT9. Requires Ca(2+) as cofactor. Expressed only in pancreas, lung and kidney.

It is found in the cytoplasmic vesicle. Its subcellular location is the secretory vesicle membrane. In terms of biological role, ca(2+) sensor specifically required for the Ca(2+)-dependent exocytosis of secretory vesicles containing IGF1 in neurons of the olfactory bulb. Exocytosis of IGF1 is required for sensory perception of smell. Not involved in Ca(2+)-dependent synaptic vesicle exocytosis. Acts through Ca(2+) and phospholipid binding to the C2 domain: Ca(2+) induces binding of the C2-domains to phospholipid membranes and to assembled SNARE-complexes; both actions contribute to triggering exocytosis. In Homo sapiens (Human), this protein is Synaptotagmin-10 (SYT10).